The following is a 119-amino-acid chain: MFGVGIDIIEIDRIRKSYQTYGDRFLKKIFTEGERVYCFSKSNPYASLAARFAAKEAVAKALGTGIGKLLKWKEIEMRRDSRQPQVVVPEALLCSLGVKRVLLSVSHSREYATAVAIAE.

Asp-7 and Glu-56 together coordinate Mg(2+).

This sequence belongs to the P-Pant transferase superfamily. AcpS family. Requires Mg(2+) as cofactor.

It is found in the cytoplasm. It catalyses the reaction apo-[ACP] + CoA = holo-[ACP] + adenosine 3',5'-bisphosphate + H(+). In terms of biological role, transfers the 4'-phosphopantetheine moiety from coenzyme A to a Ser of acyl-carrier-protein. The chain is Holo-[acyl-carrier-protein] synthase from Chlamydia trachomatis serovar L2 (strain ATCC VR-902B / DSM 19102 / 434/Bu).